A 407-amino-acid polypeptide reads, in one-letter code: Transcriptional regulator UL34 (407 aa).

Residues 268–330 (AAGPPEADEN…ENEEEEEELF (63 aa)) form a disordered region. A compositionally biased stretch (acidic residues) spans 273–286 (EADENNDEGEEDDD). Positions 287-301 (ELRHSDPAPLHDSKK) are enriched in basic and acidic residues. Residues 302-312 (PRNARRPRTRV) are compositionally biased toward basic residues.

It belongs to the HHV-5 UL34 protein family.

The protein resides in the host nucleus. Acts as a transcriptional repressor of the US3 gene expression through a specific DNA sequence named the transcriptional repressive element (tre). This is Transcriptional regulator UL34 (UL34) from Homo sapiens (Human).